Here is a 69-residue protein sequence, read N- to C-terminus: Putative membrane protein insertion efficiency factor (69 aa).

Belongs to the UPF0161 family.

The protein localises to the cell inner membrane. Functionally, could be involved in insertion of integral membrane proteins into the membrane. The sequence is that of Putative membrane protein insertion efficiency factor from Chromobacterium violaceum (strain ATCC 12472 / DSM 30191 / JCM 1249 / CCUG 213 / NBRC 12614 / NCIMB 9131 / NCTC 9757 / MK).